The chain runs to 160 residues: Transcription elongation factor GreA (160 aa).

The stretch at leucine 43 to leucine 76 forms a coiled coil.

This sequence belongs to the GreA/GreB family.

In terms of biological role, necessary for efficient RNA polymerase transcription elongation past template-encoded arresting sites. The arresting sites in DNA have the property of trapping a certain fraction of elongating RNA polymerases that pass through, resulting in locked ternary complexes. Cleavage of the nascent transcript by cleavage factors such as GreA or GreB allows the resumption of elongation from the new 3'terminus. GreA releases sequences of 2 to 3 nucleotides. This Chlorobium phaeobacteroides (strain BS1) protein is Transcription elongation factor GreA.